A 185-amino-acid chain; its full sequence is MIEETLLEAEEKMEKAVVVAKEDFAAIRTGRAHPAMFNKIVAEYYGAPTPINQLASFSVPEPRMAVVTPFDKTALRNIEQAIRDSDLGVNPSNDGNIIRVTFPELTEERRREYIKVAKAKGEDAKVSIRSVRRKAKDSIDKMVKDGEVGEDEGRRAEKELDDTTAKYVAQVDELLKHKEAELLEV.

The segment at 137–162 (DSIDKMVKDGEVGEDEGRRAEKELDD) is disordered.

The protein belongs to the RRF family.

The protein localises to the cytoplasm. Functionally, responsible for the release of ribosomes from messenger RNA at the termination of protein biosynthesis. May increase the efficiency of translation by recycling ribosomes from one round of translation to another. This Streptomyces coelicolor (strain ATCC BAA-471 / A3(2) / M145) protein is Ribosome-recycling factor.